Reading from the N-terminus, the 145-residue chain is Transcription antitermination protein NusB (145 aa).

The protein belongs to the NusB family.

Functionally, involved in transcription antitermination. Required for transcription of ribosomal RNA (rRNA) genes. Binds specifically to the boxA antiterminator sequence of the ribosomal RNA (rrn) operons. The polypeptide is Transcription antitermination protein NusB (Citrifermentans bemidjiense (strain ATCC BAA-1014 / DSM 16622 / JCM 12645 / Bem) (Geobacter bemidjiensis)).